The following is a 232-amino-acid chain: UPF0758 protein EF_2926 (232 aa).

Residues 107 to 229 (KVTSSQQVAQ…YISLREENFF (123 aa)) form the MPN domain. Zn(2+) is bound by residues His-178, His-180, and Asp-191. Positions 178–191 (HNHPSGNPTPSPQD) match the JAMM motif motif.

It belongs to the UPF0758 family.

The sequence is that of UPF0758 protein EF_2926 from Enterococcus faecalis (strain ATCC 700802 / V583).